Reading from the N-terminus, the 435-residue chain is Homoserine dehydrogenase (435 aa).

The NADPH site is built by Thr13, Val14, Arg43, and Lys105. Val14 contributes to the NAD(+) binding site. Positions 14, 43, and 105 each coordinate NADP(+). Positions 129, 132, 134, and 136 each coordinate Na(+). Lys204 serves as the catalytic Proton donor. 2 disordered regions span residues 255 to 274 (ARGVELARAPDPDPRETPDR) and 377 to 402 (RCDDSEGNRRQAERRRSGRHHHPDHV). Composition is skewed to basic and acidic residues over residues 262–274 (RAPDPDPRETPDR) and 377–391 (RCDDSEGNRRQAERR).

It belongs to the homoserine dehydrogenase family. A metal cation is required as a cofactor.

It carries out the reaction L-homoserine + NADP(+) = L-aspartate 4-semialdehyde + NADPH + H(+). The enzyme catalyses L-homoserine + NAD(+) = L-aspartate 4-semialdehyde + NADH + H(+). Its pathway is amino-acid biosynthesis; L-methionine biosynthesis via de novo pathway; L-homoserine from L-aspartate: step 3/3. The protein operates within amino-acid biosynthesis; L-threonine biosynthesis; L-threonine from L-aspartate: step 3/5. Catalyzes the conversion of L-aspartate-beta-semialdehyde (L-Asa) to L-homoserine (L-Hse), the third step in the biosynthesis of threonine and methionine from aspartate. This Methylobacillus glycogenes protein is Homoserine dehydrogenase (hom).